A 32-amino-acid chain; its full sequence is Trypsin inhibitor 4 (32 aa).

Intrachain disulfides connect C6–C23, C13–C25, and C19–C31.

Belongs to the protease inhibitor I7 (squash-type serine protease inhibitor) family.

The protein resides in the secreted. In terms of biological role, inhibits trypsin. This chain is Trypsin inhibitor 4, found in Cucurbita maxima (Pumpkin).